We begin with the raw amino-acid sequence, 315 residues long: Homoserine kinase (315 aa).

An ATP-binding site is contributed by proline 97–threonine 107.

Belongs to the GHMP kinase family. Homoserine kinase subfamily.

Its subcellular location is the cytoplasm. The enzyme catalyses L-homoserine + ATP = O-phospho-L-homoserine + ADP + H(+). It functions in the pathway amino-acid biosynthesis; L-threonine biosynthesis; L-threonine from L-aspartate: step 4/5. In terms of biological role, catalyzes the ATP-dependent phosphorylation of L-homoserine to L-homoserine phosphate. The chain is Homoserine kinase from Prochlorococcus marinus (strain NATL1A).